The following is a 396-amino-acid chain: Stearoyl-[acyl-carrier-protein] 9-desaturase, chloroplastic (396 aa).

The N-terminal 33 residues, 1–33 (MAIRINTATFQSDLYRSFAFPQPKPLRSPKFAM), are a transit peptide targeting the chloroplast. Positions 138, 176, 179, 229, 262, and 265 each coordinate Fe cation.

It belongs to the fatty acid desaturase type 2 family. As to quaternary structure, homodimer. Requires Fe(2+) as cofactor.

The protein resides in the plastid. Its subcellular location is the chloroplast. The enzyme catalyses octadecanoyl-[ACP] + 2 reduced [2Fe-2S]-[ferredoxin] + O2 + 2 H(+) = (9Z)-octadecenoyl-[ACP] + 2 oxidized [2Fe-2S]-[ferredoxin] + 2 H2O. It functions in the pathway lipid metabolism; fatty acid metabolism. In terms of biological role, converts stearoyl-ACP to oleoyl-ACP by introduction of a cis double bond between carbons 9 and 10 of the acyl chain. This is Stearoyl-[acyl-carrier-protein] 9-desaturase, chloroplastic from Helianthus annuus (Common sunflower).